The chain runs to 456 residues: Bifunctional protein GlmU (456 aa).

Residues 1–229 (MLNSAMSVVI…ISETDGVNNR (229 aa)) form a pyrophosphorylase region. UDP-N-acetyl-alpha-D-glucosamine-binding positions include 11–14 (LAAG), lysine 25, glutamine 76, 81–82 (GT), 103–105 (YGD), glycine 140, glutamate 154, asparagine 169, and asparagine 227. Aspartate 105 is a Mg(2+) binding site. Asparagine 227 is a binding site for Mg(2+). The linker stretch occupies residues 230–250 (LQLSRLERIYQAEQAEKLLLS). Positions 251 to 456 (GVMLRDPARF…QGWQRPVKKK (206 aa)) are N-acetyltransferase. UDP-N-acetyl-alpha-D-glucosamine is bound by residues arginine 333 and lysine 351. Histidine 363 functions as the Proton acceptor in the catalytic mechanism. Positions 366 and 377 each coordinate UDP-N-acetyl-alpha-D-glucosamine. Acetyl-CoA is bound by residues alanine 380, 386-387 (NY), serine 405, alanine 423, and arginine 440.

The protein in the N-terminal section; belongs to the N-acetylglucosamine-1-phosphate uridyltransferase family. This sequence in the C-terminal section; belongs to the transferase hexapeptide repeat family. In terms of assembly, homotrimer. Requires Mg(2+) as cofactor.

The protein localises to the cytoplasm. The enzyme catalyses alpha-D-glucosamine 1-phosphate + acetyl-CoA = N-acetyl-alpha-D-glucosamine 1-phosphate + CoA + H(+). The catalysed reaction is N-acetyl-alpha-D-glucosamine 1-phosphate + UTP + H(+) = UDP-N-acetyl-alpha-D-glucosamine + diphosphate. Its pathway is nucleotide-sugar biosynthesis; UDP-N-acetyl-alpha-D-glucosamine biosynthesis; N-acetyl-alpha-D-glucosamine 1-phosphate from alpha-D-glucosamine 6-phosphate (route II): step 2/2. The protein operates within nucleotide-sugar biosynthesis; UDP-N-acetyl-alpha-D-glucosamine biosynthesis; UDP-N-acetyl-alpha-D-glucosamine from N-acetyl-alpha-D-glucosamine 1-phosphate: step 1/1. It participates in bacterial outer membrane biogenesis; LPS lipid A biosynthesis. Functionally, catalyzes the last two sequential reactions in the de novo biosynthetic pathway for UDP-N-acetylglucosamine (UDP-GlcNAc). The C-terminal domain catalyzes the transfer of acetyl group from acetyl coenzyme A to glucosamine-1-phosphate (GlcN-1-P) to produce N-acetylglucosamine-1-phosphate (GlcNAc-1-P), which is converted into UDP-GlcNAc by the transfer of uridine 5-monophosphate (from uridine 5-triphosphate), a reaction catalyzed by the N-terminal domain. This Salmonella typhi protein is Bifunctional protein GlmU.